The following is a 164-amino-acid chain: UPF0114 protein BCI_0033 (164 aa).

Transmembrane regions (helical) follow at residues 15 to 35 (LLFP…LKFF), 53 to 73 (LILI…LVMV), and 136 to 156 (IMWC…MAYI).

The protein belongs to the UPF0114 family.

The protein resides in the cell membrane. The sequence is that of UPF0114 protein BCI_0033 from Baumannia cicadellinicola subsp. Homalodisca coagulata.